The following is a 348-amino-acid chain: Flagellar P-ring protein (348 aa).

Residues 1–16 form the signal peptide; the sequence is MRVLTIFLLFMTSIFA.

Belongs to the FlgI family. The basal body constitutes a major portion of the flagellar organelle and consists of four rings (L,P,S, and M) mounted on a central rod.

It is found in the periplasm. The protein resides in the bacterial flagellum basal body. Assembles around the rod to form the L-ring and probably protects the motor/basal body from shearing forces during rotation. The polypeptide is Flagellar P-ring protein (Campylobacter jejuni subsp. doylei (strain ATCC BAA-1458 / RM4099 / 269.97)).